A 519-amino-acid polypeptide reads, in one-letter code: T-complex protein 11-like protein 2 (519 aa).

Positions 1-57 are disordered; that stretch reads MPFNGEKQCVSEDQPSDSDSSRFSESMASLSDYECSRQSFTSDSSSKSSSPASTSPP. At Ser16 the chain carries Phosphoserine. 2 stretches are compositionally biased toward low complexity: residues 17 to 29 and 36 to 55; these read DSDSSRFSESMAS and SRQSFTSDSSSKSSSPASTS.

The protein belongs to the TCP11 family. In terms of assembly, interacts with FMNL2; this interaction promotes muscle-derived satellite cell (MDSC) migration and differentiation.

The protein resides in the cytoplasm. It is found in the cytoskeleton. Promotes the migration of muscle-derived satellite cells (MDSCs) during differentiation throught interaction with FMNL2 and therefore may participate in microfilament assembly. The protein is T-complex protein 11-like protein 2 of Bos taurus (Bovine).